A 473-amino-acid chain; its full sequence is Arginine biosynthesis bifunctional protein ArgJ, mitochondrial (473 aa).

Substrate-binding residues include Thr-201, Lys-230, Thr-241, Glu-328, Asn-468, and Thr-473. Catalysis depends on Thr-241, which acts as the Nucleophile.

This sequence belongs to the ArgJ family. As to quaternary structure, heterodimer of an alpha and a beta chain. Post-translationally, the alpha and beta chains are autoproteolytically processed from a single precursor protein within the mitochondrion.

Its subcellular location is the mitochondrion matrix. The catalysed reaction is N(2)-acetyl-L-ornithine + L-glutamate = N-acetyl-L-glutamate + L-ornithine. The enzyme catalyses L-glutamate + acetyl-CoA = N-acetyl-L-glutamate + CoA + H(+). Its pathway is amino-acid biosynthesis; L-arginine biosynthesis; L-ornithine and N-acetyl-L-glutamate from L-glutamate and N(2)-acetyl-L-ornithine (cyclic): step 1/1. The protein operates within amino-acid biosynthesis; L-arginine biosynthesis; N(2)-acetyl-L-ornithine from L-glutamate: step 1/4. Its function is as follows. Catalyzes two activities which are involved in the cyclic version of arginine biosynthesis: the synthesis of acetylglutamate from glutamate and acetyl-CoA, and of ornithine by transacetylation between acetylornithine and glutamate. The protein is Arginine biosynthesis bifunctional protein ArgJ, mitochondrial of Ajellomyces capsulatus (strain H143) (Darling's disease fungus).